The primary structure comprises 336 residues: Glyceraldehyde-3-phosphate dehydrogenase 1 (336 aa).

Residues 12 to 13, aspartate 34, and arginine 79 each bind NAD(+); that span reads RI. Residues 149 to 151, threonine 180, 209 to 210, and arginine 232 each bind D-glyceraldehyde 3-phosphate; these read SCT and TG. Catalysis depends on cysteine 150, which acts as the Nucleophile. Asparagine 314 is an NAD(+) binding site.

This sequence belongs to the glyceraldehyde-3-phosphate dehydrogenase family. Homotetramer.

The protein localises to the cytoplasm. The catalysed reaction is D-glyceraldehyde 3-phosphate + phosphate + NAD(+) = (2R)-3-phospho-glyceroyl phosphate + NADH + H(+). The protein operates within carbohydrate degradation; glycolysis; pyruvate from D-glyceraldehyde 3-phosphate: step 1/5. Inhibited by koningic acid through the interaction of cysteine residues with koningic acid even at very low concentrations. In Trichoderma koningii (Hypocrea koningii), this protein is Glyceraldehyde-3-phosphate dehydrogenase 1 (gpd1).